A 239-amino-acid chain; its full sequence is Phosphoribosylaminoimidazole-succinocarboxamide synthase (239 aa).

This sequence belongs to the SAICAR synthetase family.

The enzyme catalyses 5-amino-1-(5-phospho-D-ribosyl)imidazole-4-carboxylate + L-aspartate + ATP = (2S)-2-[5-amino-1-(5-phospho-beta-D-ribosyl)imidazole-4-carboxamido]succinate + ADP + phosphate + 2 H(+). Its pathway is purine metabolism; IMP biosynthesis via de novo pathway; 5-amino-1-(5-phospho-D-ribosyl)imidazole-4-carboxamide from 5-amino-1-(5-phospho-D-ribosyl)imidazole-4-carboxylate: step 1/2. The protein is Phosphoribosylaminoimidazole-succinocarboxamide synthase of Bacillus cereus (strain AH187).